We begin with the raw amino-acid sequence, 436 residues long: Nicotinate phosphoribosyltransferase (436 aa).

A Phosphohistidine; by autocatalysis modification is found at H231.

This sequence belongs to the NAPRTase family. Transiently phosphorylated on a His residue during the reaction cycle. Phosphorylation strongly increases the affinity for substrates and increases the rate of nicotinate D-ribonucleotide production. Dephosphorylation regenerates the low-affinity form of the enzyme, leading to product release.

It carries out the reaction nicotinate + 5-phospho-alpha-D-ribose 1-diphosphate + ATP + H2O = nicotinate beta-D-ribonucleotide + ADP + phosphate + diphosphate. The protein operates within cofactor biosynthesis; NAD(+) biosynthesis; nicotinate D-ribonucleotide from nicotinate: step 1/1. Functionally, catalyzes the synthesis of beta-nicotinate D-ribonucleotide from nicotinate and 5-phospho-D-ribose 1-phosphate at the expense of ATP. The polypeptide is Nicotinate phosphoribosyltransferase (Vibrio campbellii (strain ATCC BAA-1116)).